The primary structure comprises 379 residues: UDP-N-acetylglucosamine--N-acetylmuramyl-(pentapeptide) pyrophosphoryl-undecaprenol N-acetylglucosamine transferase (379 aa).

Residues Thr17–Gly19, Asn128, Arg169, Ser197, and Gln298 each bind UDP-N-acetyl-alpha-D-glucosamine.

This sequence belongs to the glycosyltransferase 28 family. MurG subfamily.

The protein localises to the cell inner membrane. It carries out the reaction di-trans,octa-cis-undecaprenyl diphospho-N-acetyl-alpha-D-muramoyl-L-alanyl-D-glutamyl-meso-2,6-diaminopimeloyl-D-alanyl-D-alanine + UDP-N-acetyl-alpha-D-glucosamine = di-trans,octa-cis-undecaprenyl diphospho-[N-acetyl-alpha-D-glucosaminyl-(1-&gt;4)]-N-acetyl-alpha-D-muramoyl-L-alanyl-D-glutamyl-meso-2,6-diaminopimeloyl-D-alanyl-D-alanine + UDP + H(+). It functions in the pathway cell wall biogenesis; peptidoglycan biosynthesis. In terms of biological role, cell wall formation. Catalyzes the transfer of a GlcNAc subunit on undecaprenyl-pyrophosphoryl-MurNAc-pentapeptide (lipid intermediate I) to form undecaprenyl-pyrophosphoryl-MurNAc-(pentapeptide)GlcNAc (lipid intermediate II). This Brucella canis (strain ATCC 23365 / NCTC 10854 / RM-666) protein is UDP-N-acetylglucosamine--N-acetylmuramyl-(pentapeptide) pyrophosphoryl-undecaprenol N-acetylglucosamine transferase.